Here is a 130-residue protein sequence, read N- to C-terminus: ATP synthase epsilon chain (130 aa).

It belongs to the ATPase epsilon chain family. F-type ATPases have 2 components, CF(1) - the catalytic core - and CF(0) - the membrane proton channel. CF(1) has five subunits: alpha(3), beta(3), gamma(1), delta(1), epsilon(1). CF(0) has three main subunits: a, b and c.

It localises to the cell membrane. Its function is as follows. Produces ATP from ADP in the presence of a proton gradient across the membrane. The protein is ATP synthase epsilon chain (atpC) of Mycoplasmoides gallisepticum (strain R(low / passage 15 / clone 2)) (Mycoplasma gallisepticum).